Reading from the N-terminus, the 362-residue chain is Ferredoxin--NADP reductase 1 (362 aa).

The FAD site is built by D47, Q55, Y60, A100, F141, D309, and S350.

The protein belongs to the ferredoxin--NADP reductase type 2 family. In terms of assembly, homodimer. Requires FAD as cofactor.

The catalysed reaction is 2 reduced [2Fe-2S]-[ferredoxin] + NADP(+) + H(+) = 2 oxidized [2Fe-2S]-[ferredoxin] + NADPH. This is Ferredoxin--NADP reductase 1 from Cupriavidus pinatubonensis (strain JMP 134 / LMG 1197) (Cupriavidus necator (strain JMP 134)).